We begin with the raw amino-acid sequence, 408 residues long: MKYPNLLERFLTYVKVNTRSDETSTTTPSTQSQMDFANNILIPEMKRVGLENVYYLPNGFAIGTLPANDPSFTLKIGFISHMDTADFNAENVQPQVIENYDGGVIPLGQSGFNLDPADFASLHKYKGQTLITTDGTTLLGADDKSGIAEIMTAIEYLSAHPEIKHGEIRVGFGPDEEIGIGADKFDAENFDVDFAYTVDGGPLGELQYETFSAAGAELTFQGRNVHPGTAKDQMINALQLAIDFHNQLPEADRPEKTEGYQGFYHLMNLTGTVEEAQASYIIRDFETDAFENRKAAMQAIADKMNQELGRERVILTLKDQYYNMKQVIEKDMTPIHIAKAVMESLDIQPIIEPIRGGTDGSKISFMGIPTPNLFAGGENMHGRFEYVSLETMERAVDTIIGIVSYQEK.

Residue His81 participates in Zn(2+) binding. Asp83 is an active-site residue. Asp142 is a binding site for Zn(2+). Glu176 acts as the Proton acceptor in catalysis. Zn(2+) is bound by residues Glu177, Asp199, and His381.

The protein belongs to the peptidase M20B family. Requires Zn(2+) as cofactor.

The protein resides in the cytoplasm. It carries out the reaction Release of the N-terminal residue from a tripeptide.. Functionally, cleaves the N-terminal amino acid of tripeptides. This is Peptidase T from Streptococcus gordonii (strain Challis / ATCC 35105 / BCRC 15272 / CH1 / DL1 / V288).